We begin with the raw amino-acid sequence, 370 residues long: Keratin-associated protein 10-7 (370 aa).

The segment at 36 to 363 is 30 X 5 AA repeats of C-C-X(3); sequence DCPESCCEPP…CSRPACCGPT (328 aa). Repeat copies occupy residues 41–45, 46–50, 67–71, 89–93, 99–103, 109–113, 114–118, 119–123, 135–139, 145–149, 155–159, 160–164, 172–176, 186–190, 208–212, 218–222, 228–232, 233–237, 238–242, 250–254, 255–259, 265–269, 270–274, 275–279, 287–291, 297–301, 302–306, 321–325, 339–343, and 359–363.

The protein belongs to the KRTAP type 10 family. In terms of assembly, interacts with hair keratins. As to expression, restricted to a narrow region of the hair fiber cuticle, lying approximately 20 cell layers above the apex of the dermal papilla of the hair root; not detected in any other tissues.

Its function is as follows. In the hair cortex, hair keratin intermediate filaments are embedded in an interfilamentous matrix, consisting of hair keratin-associated proteins (KRTAP), which are essential for the formation of a rigid and resistant hair shaft through their extensive disulfide bond cross-linking with abundant cysteine residues of hair keratins. The matrix proteins include the high-sulfur and high-glycine-tyrosine keratins. The chain is Keratin-associated protein 10-7 (KRTAP10-7) from Homo sapiens (Human).